Reading from the N-terminus, the 372-residue chain is Rab9 effector protein with kelch motifs (372 aa).

Kelch repeat units follow at residues 49-95 (KVFI…FIPS), 100-146 (RIWV…TSSA), 151-200 (QLYV…VMVA), 204-250 (KLFI…SAVA), and 254-303 (HVYI…IIPW). Ser-133 bears the Phosphoserine mark. The disordered stretch occupies residues 314–340 (SNSLTLNHEAEKEDSADKVMSHSGDSH). Residues 321-340 (HEAEKEDSADKVMSHSGDSH) are compositionally biased toward basic and acidic residues.

Interacts with PIKFYVE; the interaction recruits RABEPK to the endosomal membrane. Interacts with RAB9 in its GTP-bound conformation. Post-translationally, phosphorylated on Ser residues by PIKFYVE.

It localises to the cytoplasm. The protein resides in the endosome membrane. Its function is as follows. Rab9 effector required for endosome to trans-Golgi network (TGN) transport. This chain is Rab9 effector protein with kelch motifs, found in Homo sapiens (Human).